The chain runs to 449 residues: UDP-N-acetylmuramoylalanine--D-glutamate ligase (449 aa).

118–124 (GTNGKTT) contributes to the ATP binding site.

Belongs to the MurCDEF family.

The protein localises to the cytoplasm. The enzyme catalyses UDP-N-acetyl-alpha-D-muramoyl-L-alanine + D-glutamate + ATP = UDP-N-acetyl-alpha-D-muramoyl-L-alanyl-D-glutamate + ADP + phosphate + H(+). It participates in cell wall biogenesis; peptidoglycan biosynthesis. Cell wall formation. Catalyzes the addition of glutamate to the nucleotide precursor UDP-N-acetylmuramoyl-L-alanine (UMA). The sequence is that of UDP-N-acetylmuramoylalanine--D-glutamate ligase from Staphylococcus aureus (strain MW2).